A 389-amino-acid chain; its full sequence is Large envelope protein (389 aa).

2 stretches are compositionally biased toward polar residues: residues methionine 1 to proline 10 and serine 85 to threonine 95. 2 disordered regions span residues methionine 1–leucine 54 and isoleucine 73–proline 106. Glycine 2 carries N-myristoyl glycine; by host lipidation. Residues glycine 2–alanine 108 are pre-S1. A pre-S region spans residues glycine 2–asparagine 163. Residues glycine 2 to glycine 170 lie on the Virion surface; in external conformation side of the membrane. Residues glycine 2–glycine 242 lie on the Intravirion; in internal conformation side of the membrane. Positions valine 109–asparagine 163 are pre-S2. Residues phenylalanine 171–isoleucine 191 traverse the membrane as a helical segment. Residues proline 192–glycine 242 lie on the Intravirion; in external conformation side of the membrane. A helical membrane pass occupies residues phenylalanine 243–tyrosine 263. The Virion surface segment spans residues glutamine 264–serine 337. Asparagine 309 carries N-linked (GlcNAc...) asparagine; by host glycosylation. A helical membrane pass occupies residues leucine 338–isoleucine 358. The Intravirion portion of the chain corresponds to tryptophan 359–tryptophan 364. Residues glycine 365–valine 387 traverse the membrane as a helical segment. Residues tyrosine 388–isoleucine 389 are Virion surface-facing.

The protein belongs to the orthohepadnavirus major surface antigen family. As to quaternary structure, li-HBsAg interacts with capsid protein and with HDV Large delta antigen. Isoform M associates with host chaperone CANX through its pre-S2 N glycan. This association may be essential for M proper secretion. Isoform M is N-terminally acetylated by host at a ratio of 90%, and N-glycosylated by host at the pre-S2 region. In terms of processing, myristoylated.

The protein resides in the virion membrane. In terms of biological role, the large envelope protein exists in two topological conformations, one which is termed 'external' or Le-HBsAg and the other 'internal' or Li-HBsAg. In its external conformation the protein attaches the virus to cell receptors and thereby initiating infection. This interaction determines the species specificity and liver tropism. This attachment induces virion internalization predominantly through caveolin-mediated endocytosis. The large envelope protein also assures fusion between virion membrane and endosomal membrane. In its internal conformation the protein plays a role in virion morphogenesis and mediates the contact with the nucleocapsid like a matrix protein. The middle envelope protein plays an important role in the budding of the virion. It is involved in the induction of budding in a nucleocapsid independent way. In this process the majority of envelope proteins bud to form subviral lipoprotein particles of 22 nm of diameter that do not contain a nucleocapsid. The sequence is that of Large envelope protein from Homo sapiens (Human).